Here is a 104-residue protein sequence, read N- to C-terminus: UPF0235 protein Sfri_2863 (104 aa).

Belongs to the UPF0235 family.

The protein is UPF0235 protein Sfri_2863 of Shewanella frigidimarina (strain NCIMB 400).